We begin with the raw amino-acid sequence, 414 residues long: Protein MAK11 (414 aa).

Serine 2 is subject to N-acetylserine. 6 WD repeats span residues 50-78 (AHSLSIKCLAVSRRYLVSGSNDEHIRIYD), 90-135 (SHQG…MVWR), 147-177 (GHTARVNDVDIHPTNRIAISVSDDHSIRLWN), 189-221 (LRKYNTNGTCVRWLGAKGDYFAVGLRDRVLIYE), 238-267 (LMHIETHILPFDNKEYLSVGISDGNVHFYP), and 298-330 (GHTNRIKDFKFYTNEFGTYLVTIGSDGKIVVWD). 2 positions are modified to phosphoserine: serine 376 and serine 380. Phosphothreonine is present on threonine 382.

Associates with 60S pre-ribosomal particles.

It localises to the nucleus. The protein resides in the nucleolus. It is found in the nucleus membrane. In terms of biological role, essential for cell growth. Plays a role in assembly of 60S pre-ribosomal particles in the nucleolus. Also required for replication of the M1 double-stranded RNA of the L-A virus. This latter function may reflect an enhanced requirement for free 60S ribosomal particles for the translation of viral mRNAs which lack poly-A tails. This chain is Protein MAK11 (MAK11), found in Saccharomyces cerevisiae (strain ATCC 204508 / S288c) (Baker's yeast).